A 597-amino-acid chain; its full sequence is Probable bifunctional ADP-ribose hydrolase/ADP-ribosyltransferase (597 aa).

The 201-residue stretch at 99–299 (SRLIKHGDLG…FYSKLLGPSH (201 aa)) folds into the Macro domain. Residues aspartate 118, isoleucine 119, and asparagine 133 each coordinate ADP-D-ribose. Residues cysteine 139, histidine 144, and cysteine 146 each contribute to the Zn(2+) site. Cysteine 146, isoleucine 147, aspartate 148, serine 244, threonine 245, glycine 246, and phenylalanine 248 together coordinate ADP-D-ribose. In terms of domain architecture, Deacetylase sirtuin-type spans 307-597 (ENTPQGSLSL…IGRAIPLLLE (291 aa)). NAD(+) contacts are provided by residues alanine 333, 418–421 (SNAD), and glutamine 438. 4 residues coordinate Zn(2+): cysteine 446, cysteine 450, cysteine 485, and cysteine 488. Valine 584 contacts NAD(+).

This sequence in the N-terminal section; belongs to the MacroD-type family. Zn-Macro subfamily. The protein in the C-terminal section; belongs to the sirtuin family. Class M subfamily. In terms of assembly, monomer. The cofactor is Zn(2+).

The enzyme catalyses 5-O-(ADP-D-ribosyl)-L-glutamyl-[protein] + H2O = L-glutamyl-[protein] + ADP-D-ribose + H(+). Is probably a bifunctional enzyme with ADP-ribosyltransferase and ADP-ribosylhydrolase activities. In vitro, can act as an ADP-ribosylhydrolase that hydrolyzes ADP-ribosyl-glutamate bonds. It can remove the ADP-ribosyl modification from the human mono-ADP-ribosylated PARP1 E988Q mutant, which is primarily modified on glutamate site with only minor aspartate contribution. It cannot hydrolyze the ADP-ribosyl-arpartate bond in ribosylated S.pyogenes GcvH-L. This chain is Probable bifunctional ADP-ribose hydrolase/ADP-ribosyltransferase, found in Fusarium oxysporum f. sp. cubense.